Consider the following 238-residue polypeptide: Purine nucleoside phosphorylase DeoD-type (238 aa).

H4 is a binding site for a purine D-ribonucleoside. Phosphate is bound by residues G20, R24, R43, and 87 to 90 (RIGS). A purine D-ribonucleoside is bound by residues 181-183 (EME) and 205-206 (SD). D206 serves as the catalytic Proton donor.

This sequence belongs to the PNP/UDP phosphorylase family. As to quaternary structure, homohexamer; trimer of homodimers.

The catalysed reaction is a purine D-ribonucleoside + phosphate = a purine nucleobase + alpha-D-ribose 1-phosphate. It carries out the reaction a purine 2'-deoxy-D-ribonucleoside + phosphate = a purine nucleobase + 2-deoxy-alpha-D-ribose 1-phosphate. In terms of biological role, catalyzes the reversible phosphorolytic breakdown of the N-glycosidic bond in the beta-(deoxy)ribonucleoside molecules, with the formation of the corresponding free purine bases and pentose-1-phosphate. This Mycoplasma pneumoniae (strain ATCC 29342 / M129 / Subtype 1) (Mycoplasmoides pneumoniae) protein is Purine nucleoside phosphorylase DeoD-type.